Reading from the N-terminus, the 301-residue chain is Homoserine O-acetyltransferase (301 aa).

Cys-142 serves as the catalytic Acyl-thioester intermediate. Residues Lys-163 and Ser-192 each contribute to the substrate site. The active-site Proton acceptor is the His-235. Residue Glu-237 is part of the active site. Arg-249 contributes to the substrate binding site.

Belongs to the MetA family.

The protein localises to the cytoplasm. The enzyme catalyses L-homoserine + acetyl-CoA = O-acetyl-L-homoserine + CoA. It functions in the pathway amino-acid biosynthesis; L-methionine biosynthesis via de novo pathway; O-acetyl-L-homoserine from L-homoserine: step 1/1. Its function is as follows. Transfers an acetyl group from acetyl-CoA to L-homoserine, forming acetyl-L-homoserine. The chain is Homoserine O-acetyltransferase from Bacillus thuringiensis subsp. konkukian (strain 97-27).